The sequence spans 752 residues: Zinc finger BED domain-containing protein RICESLEEPER 3 (752 aa).

The BED-type zinc finger occupies 106-166 (RKKSVVWEHF…ASCPMLKNED (61 aa)). Positions 129, 132, 153, and 159 each coordinate Zn(2+). The interval 647-733 (ELEQYLEEAL…EALFCAKDWL (87 aa)) is HATC (Hobo-Ac-Tam3) domain.

In terms of assembly, homodimer.

It is found in the nucleus. Its function is as follows. Transposase-like protein that is essential for plant growth and development. May regulate global gene expression by recruiting other cellular factors. This Oryza sativa subsp. japonica (Rice) protein is Zinc finger BED domain-containing protein RICESLEEPER 3.